Here is a 266-residue protein sequence, read N- to C-terminus: Tryptophan synthase alpha chain (266 aa).

Catalysis depends on proton acceptor residues E49 and D60.

It belongs to the TrpA family. Tetramer of two alpha and two beta chains.

The enzyme catalyses (1S,2R)-1-C-(indol-3-yl)glycerol 3-phosphate + L-serine = D-glyceraldehyde 3-phosphate + L-tryptophan + H2O. It functions in the pathway amino-acid biosynthesis; L-tryptophan biosynthesis; L-tryptophan from chorismate: step 5/5. Its function is as follows. The alpha subunit is responsible for the aldol cleavage of indoleglycerol phosphate to indole and glyceraldehyde 3-phosphate. The polypeptide is Tryptophan synthase alpha chain (Trichormus variabilis (strain ATCC 29413 / PCC 7937) (Anabaena variabilis)).